The chain runs to 440 residues: Thymidine phosphorylase (440 aa).

Belongs to the thymidine/pyrimidine-nucleoside phosphorylase family. Homodimer.

The enzyme catalyses thymidine + phosphate = 2-deoxy-alpha-D-ribose 1-phosphate + thymine. It participates in pyrimidine metabolism; dTMP biosynthesis via salvage pathway; dTMP from thymine: step 1/2. The enzymes which catalyze the reversible phosphorolysis of pyrimidine nucleosides are involved in the degradation of these compounds and in their utilization as carbon and energy sources, or in the rescue of pyrimidine bases for nucleotide synthesis. In Salmonella schwarzengrund (strain CVM19633), this protein is Thymidine phosphorylase.